Reading from the N-terminus, the 56-residue chain is Zinc finger mu-protein HVO_0758 (56 aa).

Positions 23, 26, 45, and 48 each coordinate Zn(2+). Short sequence motifs (c(P)XCG motif) lie at residues 23 to 27 and 45 to 49; these read CSECG and CADCG.

As to quaternary structure, monomer.

Functionally, zinc-binding protein that binds one zinc ion. Is involved in biofilm formation, swarming and glycerol metabolism regulation. This is Zinc finger mu-protein HVO_0758 from Haloferax volcanii (strain ATCC 29605 / DSM 3757 / JCM 8879 / NBRC 14742 / NCIMB 2012 / VKM B-1768 / DS2) (Halobacterium volcanii).